A 353-amino-acid chain; its full sequence is Biotin synthase (353 aa).

The Radical SAM core domain maps to 51–270; the sequence is NEVQCNQLLN…IALARIMMPK (220 aa). 3 residues coordinate [4Fe-4S] cluster: Cys66, Cys70, and Cys73. [2Fe-2S] cluster contacts are provided by Cys110, Cys141, Cys201, and Arg274. Residues 330–353 form a disordered region; sequence APVEAHSHDHDHDHHDHHHGHSHS. The segment covering 334–343 has biased composition (basic and acidic residues); the sequence is AHSHDHDHDH. The segment covering 344-353 has biased composition (basic residues); sequence HDHHHGHSHS.

The protein belongs to the radical SAM superfamily. Biotin synthase family. Homodimer. The cofactor is [4Fe-4S] cluster. [2Fe-2S] cluster is required as a cofactor.

The enzyme catalyses (4R,5S)-dethiobiotin + (sulfur carrier)-SH + 2 reduced [2Fe-2S]-[ferredoxin] + 2 S-adenosyl-L-methionine = (sulfur carrier)-H + biotin + 2 5'-deoxyadenosine + 2 L-methionine + 2 oxidized [2Fe-2S]-[ferredoxin]. It functions in the pathway cofactor biosynthesis; biotin biosynthesis; biotin from 7,8-diaminononanoate: step 2/2. Its function is as follows. Catalyzes the conversion of dethiobiotin (DTB) to biotin by the insertion of a sulfur atom into dethiobiotin via a radical-based mechanism. The sequence is that of Biotin synthase from Rhodopseudomonas palustris (strain HaA2).